The sequence spans 281 residues: 3-mercaptopyruvate sulfurtransferase (281 aa).

Rhodanese domains lie at 17-135 (DDPE…LLEE) and 165-278 (HENT…LPVE). A substrate-binding site is contributed by Arg-179. Residue Cys-238 is the Cysteine persulfide intermediate of the active site. A substrate specificity region spans residues 238 to 244 (CGSGVTA).

In terms of assembly, monomer.

It localises to the cytoplasm. The catalysed reaction is 2-oxo-3-sulfanylpropanoate + [thioredoxin]-dithiol = [thioredoxin]-disulfide + hydrogen sulfide + pyruvate + H(+). Catalyzes the transfer of sulfur from 3-mercaptopyruvate to a thiol-containing acceptor to form an intramolecular disulfide releasing hydrogen sulfide and pyruvate. May be involved in the enhancement of bacterial growth inhibition by serine. This is 3-mercaptopyruvate sulfurtransferase (sseA) from Escherichia coli (strain K12).